The chain runs to 415 residues: Membrane-bound ghrelin O-acyltransferase mboat4 (415 aa).

Residues 1-6 (MIDLLW) lie on the Lumenal side of the membrane. Residues 7–28 (ISSDGHPQLFYQFINIPFAFLF) form a helical membrane-spanning segment. The Cytoplasmic portion of the chain corresponds to 29 to 42 (HCLSSQGHLSIINR). The helical transmembrane segment at 43 to 58 (YVYLAMGGFMLAIATM) threads the bilayer. Over 59-61 (GPY) the chain is Lumenal. The helical transmembrane segment at 62-78 (SSLLFLSAIKLLLLIHY) threads the bilayer. The Cytoplasmic portion of the chain corresponds to 79 to 84 (IHPMHL). Residues 85–103 (HRWILGLQMCWQTCWHLYV) traverse the membrane as a helical segment. Residues 104–122 (QYQIYWLQEAPDSRLLLAI) are Lumenal-facing. The chain crosses the membrane as a helical span at residues 123 to 138 (SALMLMTQRISSLSLD). At 139–193 (FQEGTISNQSILIPFLTYSLYFPALLGGPLCSFNAFVQSVERQHTSMTSYLGNLT) the chain is on the cytoplasmic side. Residues 194-214 (SKISQVIVLVWIKQLFSELLK) form a helical membrane-spanning segment. The Lumenal segment spans residues 215-227 (SATFNIDSVCLDV). The chain crosses the membrane as a helical span at residues 228–247 (LWIWIFSLTLRLNYYAHWKM). Over 248–312 (SECVNNAAGL…RKIVFNRTSR (65 aa)) the chain is Cytoplasmic. Residues asparagine 295 and histidine 326 contribute to the active site. The chain crosses the membrane as a helical span at residues 313–326 (SPLFMTFGFSALWH). Residues 327–328 (GL) are Lumenal-facing. The chain crosses the membrane as a helical span at residues 329–345 (HPGQILGFLIWAVTVQA). Residues 346 to 364 (DYKLHRFSHPKLNSLWRKR) are Cytoplasmic-facing. A helical transmembrane segment spans residues 365–385 (LYVCVNWAFTQLTVACVVVCV). Residues 386-394 (ELQSLASVK) lie on the Lumenal side of the membrane. A helical membrane pass occupies residues 395 to 415 (LLWSSCIAVFPLLSALILIIL).

Belongs to the membrane-bound acyltransferase family. In terms of assembly, monomer. Not glycosylated.

It is found in the endoplasmic reticulum membrane. It carries out the reaction octanoyl-CoA + L-seryl-[protein] = O-octanoyl-L-seryl-[protein] + CoA. The catalysed reaction is decanoyl-CoA + L-seryl-[protein] = O-decanoyl-L-seryl-[protein] + CoA. The enzyme catalyses L-seryl-[protein] + acetyl-CoA = O-acetyl-L-seryl-[protein] + CoA. It catalyses the reaction L-seryl-[protein] + butanoyl-CoA = O-butanoyl-L-seryl-[protein] + CoA. It carries out the reaction pentanoyl-CoA + L-seryl-[protein] = O-pentanoyl-L-seryl-[protein] + CoA. The catalysed reaction is hexanoyl-CoA + L-seryl-[protein] = O-hexanoyl-L-seryl-[protein] + CoA. The enzyme catalyses heptanoyl-CoA + L-seryl-[protein] = O-heptanoyl-L-seryl-[protein] + CoA. It catalyses the reaction nonanoyl-CoA + L-seryl-[protein] = O-nonanoyl-L-seryl-[protein] + CoA. It carries out the reaction L-seryl-[protein] + dodecanoyl-CoA = O-dodecanoyl-L-seryl-[protein] + CoA. The catalysed reaction is L-seryl-[protein] + tetradecanoyl-CoA = O-tetradecanoyl-L-seryl-[protein] + CoA. The enzyme catalyses a fatty acyl-CoA + L-seryl-[protein] = O-fatty acyl-L-seryl-[protein] + CoA. Its function is as follows. Catalyzes ghrelin acylation at 'Ser-3' using preferentially octanoyl-CoA, hexanoyl-CoA and decanoyl-CoA as acyl-CoA donors leading to ghrelin activity. In vitro uses also acyl-CoA donors of different lengths from short-chain (C2) to long-chain fatty acids (C16) knowing that acyl-CoA donors from butanoyl-CoA (C4) to dodecanoyl-CoA (C12) are more efficient compared to longer acyl-CoA donors, such as myristoyl-CoA (C14) and palmitoyl-CoA (C16) that are not efficient. In Danio rerio (Zebrafish), this protein is Membrane-bound ghrelin O-acyltransferase mboat4.